The following is a 486-amino-acid chain: MPEDSSSLDYAMEKASGPHFSGLRFDGLLSSSPPNSSVVSSLRSAVSSSSPSSSDPEAPKQPFIIGVSGGTASGKTTVCDMIIQQLHDHRVVLVNQDSFYRGLTSEELQRVQEYNFDHPDAFDTEQLLHCAETLKSGQPYQVPIYDFKTHQRRSDTFRQVNASDVIILEGILVFHDSRVRNLMNMKIFVDTDADVRLARRIRRDTVERGRDVNSVLEQYAKFVKPAFDDFVLPSKKYADVIIPRGGDNHVAVDLITQHIHTKLGQHDLCKIYPNVYVIQSTFQIRGMHTLIREKDISKHDFVFYSDRLIRLVVEHGLGHLPFTEKQVVTPTGAVYTGVDFCKKLCGVSIIRSGESMENALRACCKGIKIGKILIHRDGDNGKQLIYEKLPHDISERHVLLLDPVLATGNSANQAIELLIQKGVPEAHIIFLNLISAPEGIHCVCKRFPALKIVTSEIDQCLNQEFRVIPGLGEFGDRYFGTDEEDQ.

Residues 1–47 (MPEDSSSLDYAMEKASGPHFSGLRFDGLLSSSPPNSSVVSSLRSAVS) constitute a chloroplast transit peptide. Residues 31 to 54 (SSPPNSSVVSSLRSAVSSSSPSSS) are compositionally biased toward low complexity. A disordered region spans residues 31-67 (SSPPNSSVVSSLRSAVSSSSPSSSDPEAPKQPFIIGV). Residues 59–264 (PKQPFIIGVS…ITQHIHTKLG (206 aa)) are uridine kinase. The tract at residues 274-486 (NVYVIQSTFQ…RYFGTDEEDQ (213 aa)) is uracil phosphoribosyltransferase. GTP-binding positions include Lys298, Arg307, and 341–344 (CKKL). Residues Arg351 and Arg376 each contribute to the 5-phospho-alpha-D-ribose 1-diphosphate site. Arg396 lines the GTP pocket. 5-phospho-alpha-D-ribose 1-diphosphate contacts are provided by residues Asp402, 407–410 (TGNS), and Glu473. A uracil-binding site is contributed by 472–474 (GEF).

This sequence in the N-terminal section; belongs to the uridine kinase family. In the C-terminal section; belongs to the UPRTase family. As to expression, expressed in roots, leaves and stems.

The protein localises to the plastid. It is found in the chloroplast. The protein resides in the cytoplasm. It catalyses the reaction cytidine + ATP = CMP + ADP + H(+). The catalysed reaction is uridine + ATP = UMP + ADP + H(+). Its pathway is pyrimidine metabolism; CTP biosynthesis via salvage pathway; CTP from cytidine: step 1/3. It functions in the pathway pyrimidine metabolism; UMP biosynthesis via salvage pathway; UMP from uridine: step 1/1. Functionally, involved in the pyrimidine salvage pathway. Phosphorylates uridine to uridine monophosphate (UMP). Phosphorylates cytidine to cytidine monophosphate (CMP). Does not possess uracil phosphoribosyltransferase (UPRTase) activity that catalyzes the conversion of uracil and 5-phospho-alpha-D-ribose 1-diphosphate (PRPP) to UMP and diphosphate. This is Uridine/cytidine kinase UKL1, chloroplastic from Arabidopsis thaliana (Mouse-ear cress).